A 545-amino-acid chain; its full sequence is RAN GTPase-activating protein 2 (545 aa).

The interval 1–116 (MADILDSRPH…VAARELISED (116 aa)) is WPP. LRR repeat units lie at residues 213 to 236 (GSILSSLNLSDNALGEKGVRAFGA), 241 to 264 (LSSLEELYLMNDGISKEAAQAVSE), 269 to 296 (TENLRVLHFHNNMTGDEGALAIAEVVKR), 325 to 348 (CTHMEKLDLRDNMFGTEAGVSLSK), 353 to 380 (FKHMTELYLSYLNLEDEGAIAIVNALKE), 382 to 405 (ASPIEVLEMAGNDITVEAASAIAA), 410 to 433 (KQDLNKLNLSENELKDEGCVQIAN), 439 to 462 (HSKLQYIDMSTNYIRRAGARALAH), and 467 to 494 (KEAFKLLNIDGNIISEEGIEELKEIFKK). Positions 496 to 545 (PELLGALDENDPDGEEDDDDEEDEEDEENEGNGNGELESKLKNLEVNQED) are disordered. Positions 503–525 (DENDPDGEEDDDDEEDEEDEENE) are enriched in acidic residues.

This sequence belongs to the RNA1 family. In terms of assembly, homodimer. Interacts with WIP1 and WIP2 through its WPP domain. Component of Ran complexes at least composed of WIT1 or WIT2, RANGAP1 or RANGAP2, and WIP1 or WIP2 or WIP3. Interacts with WIT1.

Its subcellular location is the cytoplasm. The protein localises to the nucleus membrane. It is found in the cytoskeleton. It localises to the spindle. The protein resides in the phragmoplast. Functionally, GTPase activator for the nuclear Ras-related regulatory protein Ran, converting it to the putatively inactive GDP-bound state. This chain is RAN GTPase-activating protein 2 (RANGAP2), found in Arabidopsis thaliana (Mouse-ear cress).